A 424-amino-acid chain; its full sequence is L-rhamnose isomerase (424 aa).

Mn(2+)-binding residues include His-261, Asp-293, and Asp-295.

This sequence belongs to the rhamnose isomerase family. Requires Mn(2+) as cofactor.

It localises to the cytoplasm. The catalysed reaction is L-rhamnopyranose = L-rhamnulose. Its pathway is carbohydrate degradation; L-rhamnose degradation; glycerone phosphate from L-rhamnose: step 1/3. Its function is as follows. Catalyzes the interconversion of L-rhamnose and L-rhamnulose. This is L-rhamnose isomerase from Bacillus subtilis (strain 168).